Consider the following 444-residue polypeptide: Xylose isomerase (444 aa).

Positions 307 and 309 each coordinate Mg(2+).

It belongs to the xylose isomerase family. Homotetramer. Mg(2+) serves as cofactor.

Its subcellular location is the cytoplasm. The enzyme catalyses alpha-D-xylose = alpha-D-xylulofuranose. The chain is Xylose isomerase from Thermotoga neapolitana (strain ATCC 49049 / DSM 4359 / NBRC 107923 / NS-E).